The sequence spans 532 residues: uncharacterized protein (532 aa).

A run of 5 helical transmembrane segments spans residues 11 to 31 (YLSH…ALII), 51 to 71 (IEPF…KIFF), 126 to 146 (LIDI…YTLW), 147 to 167 (ILYN…IIVF), and 231 to 253 (YVES…VLLI). Positions 315-531 (ICINKLVYEY…MIIPMNNGII (217 aa)) constitute an ABC transporter domain. Residue 349–356 (GKSGSGKS) participates in ATP binding.

It localises to the membrane. This is an uncharacterized protein from Acanthamoeba polyphaga mimivirus (APMV).